We begin with the raw amino-acid sequence, 470 residues long: SHUGOSHIN 2 (470 aa).

A coiled-coil region spans residues 72 to 113 (IQKLRINLRSVQEKNLQLAQANSQMLAELNTNRDRLKDLQHE). 2 stretches are compositionally biased toward basic and acidic residues: residues 131–143 (VLPRTHHESKDKV) and 150–162 (GDCKSFQVHDIKH). Disordered regions lie at residues 131-176 (VLPR…IKSS) and 358-470 (ESAG…RRKC). The segment covering 163–172 (KDTKRKRTTR) has biased composition (basic residues). Positions 370-381 (SESRHETKEITR) are enriched in basic and acidic residues. Positions 382 to 392 (KRSFSTRRQST) are enriched in basic residues. Basic and acidic residues-rich tracts occupy residues 396–406 (SQTDEAIKEIA), 423–438 (TESKDKPKADENEGMT), and 449–462 (HAAEKVQSYREVSL).

It belongs to the shugoshin family.

Its function is as follows. Dispensable for both meiotic and mitotic cell cycle progression. Required with SGO1 for full protection of centromeric cohesion during anaphase I. Required to prevent precocious release of pericentromeric cohesins during meiosis. Acts redundantly to SGO1. In Arabidopsis thaliana (Mouse-ear cress), this protein is SHUGOSHIN 2.